The sequence spans 186 residues: NADH-quinone oxidoreductase subunit C (186 aa).

Residues 166–186 (DSLTPWKGVGRPSDPFDGRKE) form a disordered region.

Belongs to the complex I 30 kDa subunit family. In terms of assembly, NDH-1 is composed of 14 different subunits. Subunits NuoB, C, D, E, F, and G constitute the peripheral sector of the complex.

It is found in the cell inner membrane. The catalysed reaction is a quinone + NADH + 5 H(+)(in) = a quinol + NAD(+) + 4 H(+)(out). Its function is as follows. NDH-1 shuttles electrons from NADH, via FMN and iron-sulfur (Fe-S) centers, to quinones in the respiratory chain. The immediate electron acceptor for the enzyme in this species is believed to be ubiquinone. Couples the redox reaction to proton translocation (for every two electrons transferred, four hydrogen ions are translocated across the cytoplasmic membrane), and thus conserves the redox energy in a proton gradient. The sequence is that of NADH-quinone oxidoreductase subunit C from Neorickettsia sennetsu (strain ATCC VR-367 / Miyayama) (Ehrlichia sennetsu).